A 168-amino-acid chain; its full sequence is ATP synthase subunit d, mitochondrial (168 aa).

The protein belongs to the ATPase d subunit family. F-type ATPases have 2 components, CF(1) - the catalytic core - and CF(0) - the membrane proton channel. CF(0) seems to have nine subunits: a, b, c, d, e, f, g, F6 and 8 (or A6L).

Its subcellular location is the mitochondrion. It localises to the mitochondrion inner membrane. In terms of biological role, mitochondrial membrane ATP synthase (F(1)F(0) ATP synthase or Complex V) produces ATP from ADP in the presence of a proton gradient across the membrane which is generated by electron transport complexes of the respiratory chain. F-type ATPases consist of two structural domains, F(1) - containing the extramembraneous catalytic core, and F(0) - containing the membrane proton channel, linked together by a central stalk and a peripheral stalk. During catalysis, ATP synthesis in the catalytic domain of F(1) is coupled via a rotary mechanism of the central stalk subunits to proton translocation. Part of the complex F(0) domain and the peripheric stalk, which acts as a stator to hold the catalytic alpha(3)beta(3) subcomplex and subunit a/ATP6 static relative to the rotary elements. This chain is ATP synthase subunit d, mitochondrial, found in Arabidopsis thaliana (Mouse-ear cress).